Reading from the N-terminus, the 365-residue chain is MNIMDFNVKKLAADAGTFLSRAVQFTEEKLGQAEKTELDAHLENLLSKAECTKIWTEKIMKQTEVLLQPNPNARIEEFVYEKLDRKAPSRINNPELLGQYMIDAGTEFGPGTAYGNALIKCGETQKRIGTADRELIQTSALNFLTPLRNFIEGDYKTIAKERKLLQNKRLDLDAAKTRLKKAKAAETKSSSEQELRITQSEFDRQAEITRLLLEGISSTHAHHLRCLNDFVEAQMTYYAQCYQYMLDLQKQLGSFPSNYLSNNNQTSGTPVPYALSNAIGPSAQASTGSLVITCPSNLNDLKESSNNRKARVLYDYDAANSTELSLLADEVITVFSVVGMDSDWLMGERGNQKGKVPITYLELLN.

Met-1 is modified (N-acetylmethionine). The segment at 1–30 is membrane-binding amphipathic helix; it reads MNIMDFNVKKLAADAGTFLSRAVQFTEEKL. Residues 1-37 form a required for membrane binding region; sequence MNIMDFNVKKLAADAGTFLSRAVQFTEEKLGQAEKTE. Residues 27 to 261 form the BAR domain; sequence EEKLGQAEKT…LGSFPSNYLS (235 aa). Position 145 is a phosphothreonine; by CDK5 (Thr-145). Residues 155–186 adopt a coiled-coil conformation; that stretch reads YKTIAKERKLLQNKRLDLDAAKTRLKKAKAAE. The SH3 domain occupies 305-365; it reads SNNRKARVLY…VPITYLELLN (61 aa).

This sequence belongs to the endophilin family. Homodimer, and heterodimer with SH3GLB2. Binds BAX; induction of apoptosis augments BAX binding. Binds DNM1, HTT, AMPH, BIN1 and ARFGAP1. Interacts with UVRAG; UVRAG bridges the interaction to BECN1 indicative for an association with the PI3K complex II (PI3KC3-C2). Isoform 3 interacts with PPP1CC; this interaction leads to the inhibition of phosphatase activity. Phosphorylated at Thr-145 by CDK5; this phosphorylation is required for autophagy induction in starved neurons and facilitates homodimerization. Isoform 1 is widely expressed. Isoform 2 is brain-specific. Isoform 3 is predominantly expressed in testis, but it is also detected in liver and, at much lower levels, in skin, stomach and ovary.

It localises to the cytoplasm. It is found in the golgi apparatus membrane. The protein localises to the mitochondrion outer membrane. The protein resides in the cytoplasmic vesicle. Its subcellular location is the autophagosome membrane. It localises to the midbody. In terms of biological role, may be required for normal outer mitochondrial membrane dynamics. Required for coatomer-mediated retrograde transport in certain cells. May recruit other proteins to membranes with high curvature. May promote membrane fusion. Involved in activation of caspase-dependent apoptosis by promoting BAX/BAK1 activation. Isoform 1 acts proapoptotic in fibroblasts. Involved in caspase-independent apoptosis during nutrition starvation and involved in the regulation of autophagy. Activates lipid kinase activity of PIK3C3 during autophagy probably by associating with the PI3K complex II (PI3KC3-C2). Associated with PI3KC3-C2 during autophagy may regulate the trafficking of ATG9A from the Golgi complex to the peripheral cytoplasm for the formation of autophagosomes by inducing Golgi membrane tubulation and fragmentation. Involved in regulation of degradative endocytic trafficking and cytokinesis, probably in the context of PI3KC3-C2. Isoform 2 acts antiapoptotic in neuronal cells; involved in maintenance of mitochondrial morphology and promotes neuronal viability. This is Endophilin-B1 (Sh3glb1) from Mus musculus (Mouse).